Reading from the N-terminus, the 240-residue chain is uncharacterized protein (240 aa).

At 1-85 the chain is on the cytoplasmic side; sequence MSGFIKSTLL…LCGCCCWTNT (85 aa). A helical membrane pass occupies residues 86–106; that stretch reads IGWAPLLALLPVIGPLLMYWV. Residues 107-131 lie on the Extracellular side of the membrane; it reads HDKLIELADDRYKLPAEIKVKMHGN. Residues 132–152 traverse the membrane as a helical segment; that stretch reads IVIDLLISLVPILGSVFAWLH. Residues 153 to 240 are Cytoplasmic-facing; the sequence is ACSTRNAAIV…TNGRPQRGYR (88 aa). The interval 181-240 is disordered; the sequence is QKEENEKHSNANTAPPVVGGNKNVNGNRNNSKMYNRPPVTAPPAPAYTRSTNGRPQRGYR. Over residues 197-210 the composition is skewed to low complexity; it reads VVGGNKNVNGNRNN.

It is found in the membrane. This is an uncharacterized protein from Saccharomyces cerevisiae (strain ATCC 204508 / S288c) (Baker's yeast).